A 285-amino-acid chain; its full sequence is Energy-coupling factor transporter ATP-binding protein EcfA1 (285 aa).

The ABC transporter domain maps to 9–246 (VTVEHLSFTY…VSLIKNAGLD (238 aa)). Position 43–50 (43–50 (GHNGSGKS)) interacts with ATP.

Belongs to the ABC transporter superfamily. Energy-coupling factor EcfA family. Forms a stable energy-coupling factor (ECF) transporter complex composed of 2 membrane-embedded substrate-binding proteins (S component), 2 ATP-binding proteins (A component) and 2 transmembrane proteins (T component).

It localises to the cell membrane. In terms of biological role, ATP-binding (A) component of a common energy-coupling factor (ECF) ABC-transporter complex. Unlike classic ABC transporters this ECF transporter provides the energy necessary to transport a number of different substrates. In Lactobacillus gasseri (strain ATCC 33323 / DSM 20243 / BCRC 14619 / CIP 102991 / JCM 1131 / KCTC 3163 / NCIMB 11718 / NCTC 13722 / AM63), this protein is Energy-coupling factor transporter ATP-binding protein EcfA1.